A 485-amino-acid polypeptide reads, in one-letter code: UDP-N-acetylmuramate--L-alanine ligase (485 aa).

127-133 (GTHGKTT) is a binding site for ATP.

This sequence belongs to the MurCDEF family.

It is found in the cytoplasm. The catalysed reaction is UDP-N-acetyl-alpha-D-muramate + L-alanine + ATP = UDP-N-acetyl-alpha-D-muramoyl-L-alanine + ADP + phosphate + H(+). The protein operates within cell wall biogenesis; peptidoglycan biosynthesis. Functionally, cell wall formation. The sequence is that of UDP-N-acetylmuramate--L-alanine ligase from Shewanella frigidimarina (strain NCIMB 400).